The sequence spans 249 residues: Chymase (249 aa).

An N-terminal signal peptide occupies residues 1-19; the sequence is MHCLPLTLLLLLLCSRAEA. A propeptide spans 20–21 (activation peptide); sequence EE. Residues 22–245 enclose the Peptidase S1 domain; sequence IIGGTESKPH…YRPWINKVLK (224 aa). Cysteine 51 and cysteine 67 are disulfide-bonded. Catalysis depends on charge relay system residues histidine 66 and aspartate 110. 2 disulfide bridges follow: cysteine 144–cysteine 209 and cysteine 175–cysteine 188. Serine 203 serves as the catalytic Charge relay system.

Belongs to the peptidase S1 family. Granzyme subfamily.

Its subcellular location is the secreted. The protein resides in the cytoplasmic granule. It catalyses the reaction Preferential cleavage: Phe-|-Xaa &gt; Tyr-|-Xaa &gt; Trp-|-Xaa &gt; Leu-|-Xaa.. Functionally, major secreted protease of mast cells with suspected roles in vasoactive peptide generation, extracellular matrix degradation, and regulation of gland secretion. This is Chymase (CMA1) from Canis lupus familiaris (Dog).